We begin with the raw amino-acid sequence, 713 residues long: Mitochondrial intermediate peptidase (713 aa).

A mitochondrion-targeting transit peptide spans 1–35 (MLCVGRLGGLGARAAALPPRRAGRGILEAGIRARR). The residue at position 126 (lysine 126) is an N6-acetyllysine. Residue histidine 495 participates in Zn(2+) binding. The active site involves glutamate 496. Zn(2+) is bound by residues histidine 499 and histidine 502.

This sequence belongs to the peptidase M3 family. In terms of assembly, monomer. Requires Zn(2+) as cofactor.

It is found in the mitochondrion matrix. The catalysed reaction is Release of an N-terminal octapeptide as second stage of processing of some proteins imported into the mitochondrion.. Its activity is regulated as follows. Activity is divalent cation-dependent. It is stimulated by manganese, magnesium or calcium ions and reversibly inhibited by zinc, cobalt and iron. Cleaves proteins, imported into the mitochondrion, to their mature size. The protein is Mitochondrial intermediate peptidase (MIPEP) of Pongo abelii (Sumatran orangutan).